A 251-amino-acid polypeptide reads, in one-letter code: Uridylate kinase (251 aa).

19–22 (KLSG) is an ATP binding site. A UMP-binding site is contributed by glycine 61. The ATP site is built by glycine 62 and arginine 66. Residues aspartate 81 and 142–149 (IGNPFFTT) each bind UMP. Threonine 169, glutamine 170, tyrosine 175, and aspartate 178 together coordinate ATP.

Belongs to the UMP kinase family. Homohexamer.

The protein localises to the cytoplasm. It catalyses the reaction UMP + ATP = UDP + ADP. It participates in pyrimidine metabolism; CTP biosynthesis via de novo pathway; UDP from UMP (UMPK route): step 1/1. With respect to regulation, inhibited by UTP. Its function is as follows. Catalyzes the reversible phosphorylation of UMP to UDP. This is Uridylate kinase from Hyphomonas neptunium (strain ATCC 15444).